A 312-amino-acid chain; its full sequence is Bifunctional pinoresinol-lariciresinol reductase (312 aa).

NADP(+) contacts are provided by residues 10–16, Arg35, and Lys44; that span reads GGTGYIG. Lys136 serves as the catalytic Proton acceptor. Arg140 serves as a coordination point for NADP(+). A substrate-binding site is contributed by His268.

Belongs to the NmrA-type oxidoreductase family. Isoflavone reductase subfamily. As to quaternary structure, dimer. Expressed in seed coats, but not in embryos, leaves, stems and roots.

In terms of biological role, reductase involved in lignan biosynthesis. Catalyzes the sequential conversion of pinoresinol into lariciresinol and of lariciresinol into secoisolariciresinol. Abstracts the 4R-hydride from the NADPH cofactor during catalysis. The polypeptide is Bifunctional pinoresinol-lariciresinol reductase (Linum usitatissimum (Flax)).